A 437-amino-acid chain; its full sequence is MRLSRSLIPTLKETPAEAQIVSHRLMLRAGLIRQQSAGIYAWLPAGLRVLHNIANIVREEQARAGSQEILMPTIQSAELWRESGRYDAYGPEMLRIRDRHDREMLYGPTNEEMLTAIMRDSVQSYRDLPQMLYQIQWKFRDEVRPRFGVLRGREFYMKDGYSFDLDYEGAVESYRRMMLAYMRTFKRMGVRAVPMRADTGPIGGNLSHEFHILAPTGESGVFYDSSFETIELGDDAYDYEARADLDAFFDRMTSLYAATDEKHDEAAWAKVPEDRRREGRGIEVGQIFYFGTKYSQAMNFTVVGPDGARLHPEMGSYGIGVSRLTGAIIEASHDEAGIIWPDAIAPFRASILNLRQGDQVTDALCERIYDALGRDALYDDREARAGEKFADADLMGHPWQVIVGPRGAAKGQVELKHRRTGERAELDIESALAKVRV.

It belongs to the class-II aminoacyl-tRNA synthetase family. ProS type 2 subfamily. Homodimer.

It is found in the cytoplasm. It catalyses the reaction tRNA(Pro) + L-proline + ATP = L-prolyl-tRNA(Pro) + AMP + diphosphate. Its function is as follows. Catalyzes the attachment of proline to tRNA(Pro) in a two-step reaction: proline is first activated by ATP to form Pro-AMP and then transferred to the acceptor end of tRNA(Pro). The sequence is that of Proline--tRNA ligase from Acidiphilium cryptum (strain JF-5).